Consider the following 93-residue polypeptide: UPF0367 protein ssl1972 (93 aa).

The protein belongs to the UPF0367 family.

This Synechocystis sp. (strain ATCC 27184 / PCC 6803 / Kazusa) protein is UPF0367 protein ssl1972.